We begin with the raw amino-acid sequence, 369 residues long: Geranylgeranyl pyrophosphate synthase, chloroplastic (369 aa).

3 residues coordinate isopentenyl diphosphate: Lys118, Arg121, and His150. Residues Asp157 and Asp163 each contribute to the Mg(2+) site. Arg168 is a dimethylallyl diphosphate binding site. Arg169 provides a ligand contact to isopentenyl diphosphate. Residues Lys254, Thr255, Gln292, Lys309, and Lys319 each coordinate dimethylallyl diphosphate.

This sequence belongs to the FPP/GGPP synthase family. Monomer. Mg(2+) is required as a cofactor.

It localises to the plastid. The protein localises to the chloroplast. The enzyme catalyses isopentenyl diphosphate + dimethylallyl diphosphate = (2E)-geranyl diphosphate + diphosphate. It carries out the reaction isopentenyl diphosphate + (2E)-geranyl diphosphate = (2E,6E)-farnesyl diphosphate + diphosphate. It catalyses the reaction isopentenyl diphosphate + (2E,6E)-farnesyl diphosphate = (2E,6E,10E)-geranylgeranyl diphosphate + diphosphate. It functions in the pathway isoprenoid biosynthesis; farnesyl diphosphate biosynthesis; farnesyl diphosphate from geranyl diphosphate and isopentenyl diphosphate: step 1/1. It participates in isoprenoid biosynthesis; geranyl diphosphate biosynthesis; geranyl diphosphate from dimethylallyl diphosphate and isopentenyl diphosphate: step 1/1. The protein operates within isoprenoid biosynthesis; geranylgeranyl diphosphate biosynthesis; geranylgeranyl diphosphate from farnesyl diphosphate and isopentenyl diphosphate: step 1/1. In terms of biological role, catalyzes the trans-addition of the three molecules of IPP onto DMAPP to form geranylgeranyl pyrophosphate. The chain is Geranylgeranyl pyrophosphate synthase, chloroplastic from Capsicum annuum (Capsicum pepper).